The sequence spans 318 residues: D-alanine--D-alanine ligase B (318 aa).

An ATP-grasp domain is found at 117-315 (KQVWLSLGLS…FEALVWRVLE (199 aa)). Residue 146 to 201 (AEQIGLPVIVKPANEGSSVGVSRVFDQAQLDEAVTLAARYDGALLMEQLIEGDELT) participates in ATP binding. Mg(2+) contacts are provided by Asp-268, Glu-282, and Asn-284.

It belongs to the D-alanine--D-alanine ligase family. Mg(2+) is required as a cofactor. It depends on Mn(2+) as a cofactor.

It localises to the cytoplasm. It catalyses the reaction 2 D-alanine + ATP = D-alanyl-D-alanine + ADP + phosphate + H(+). It functions in the pathway cell wall biogenesis; peptidoglycan biosynthesis. Its function is as follows. Cell wall formation. The chain is D-alanine--D-alanine ligase B from Xanthomonas campestris pv. campestris (strain ATCC 33913 / DSM 3586 / NCPPB 528 / LMG 568 / P 25).